The sequence spans 238 residues: Large ribosomal subunit protein uL2 (238 aa).

Disordered stretches follow at residues 1–34 and 197–238; these read MGKR…PPLS and VDHP…RRKR. The segment covering 224 to 238 has biased composition (basic residues); it reads KVGHIAARRTGRRKR.

The protein belongs to the universal ribosomal protein uL2 family. Part of the 50S ribosomal subunit. Forms a bridge to the 30S subunit in the 70S ribosome.

Functionally, one of the primary rRNA binding proteins. Required for association of the 30S and 50S subunits to form the 70S ribosome, for tRNA binding and peptide bond formation. It has been suggested to have peptidyltransferase activity; this is somewhat controversial. Makes several contacts with the 16S rRNA in the 70S ribosome. This Aeropyrum pernix (strain ATCC 700893 / DSM 11879 / JCM 9820 / NBRC 100138 / K1) protein is Large ribosomal subunit protein uL2.